The sequence spans 1264 residues: ATP-dependent helicase/nuclease subunit A (1264 aa).

The 471-residue stretch at 12 to 482 (EQFTDSQWQA…IILAENFRSR (471 aa)) folds into the UvrD-like helicase ATP-binding domain. Residue 33–40 (ASAGSGKT) coordinates ATP. The UvrD-like helicase C-terminal domain maps to 520-808 (SEAADYSTEL…RVMTIHASKG (289 aa)).

This sequence belongs to the helicase family. AddA subfamily. Heterodimer of AddA and AddB/RexB. Mg(2+) serves as cofactor.

The enzyme catalyses Couples ATP hydrolysis with the unwinding of duplex DNA by translocating in the 3'-5' direction.. It catalyses the reaction ATP + H2O = ADP + phosphate + H(+). Its function is as follows. The heterodimer acts as both an ATP-dependent DNA helicase and an ATP-dependent, dual-direction single-stranded exonuclease. Recognizes the chi site generating a DNA molecule suitable for the initiation of homologous recombination. The AddA nuclease domain is required for chi fragment generation; this subunit has the helicase and 3' -&gt; 5' nuclease activities. This is ATP-dependent helicase/nuclease subunit A from Enterococcus faecalis (strain ATCC 700802 / V583).